Reading from the N-terminus, the 425-residue chain is Glutamate-1-semialdehyde 2,1-aminomutase (425 aa).

K265 is subject to N6-(pyridoxal phosphate)lysine.

This sequence belongs to the class-III pyridoxal-phosphate-dependent aminotransferase family. HemL subfamily. In terms of assembly, homodimer. Requires pyridoxal 5'-phosphate as cofactor.

Its subcellular location is the cytoplasm. It catalyses the reaction (S)-4-amino-5-oxopentanoate = 5-aminolevulinate. The protein operates within porphyrin-containing compound metabolism; protoporphyrin-IX biosynthesis; 5-aminolevulinate from L-glutamyl-tRNA(Glu): step 2/2. The protein is Glutamate-1-semialdehyde 2,1-aminomutase of Clostridium perfringens (strain 13 / Type A).